The sequence spans 176 residues: PKHD-type hydroxylase Mfla_0096 (176 aa).

The region spanning 78-147 (KVFPPLFNRY…NQIARGTYGA (70 aa)) is the Fe2OG dioxygenase domain.

Fe(2+) serves as cofactor. L-ascorbate is required as a cofactor.

The chain is PKHD-type hydroxylase Mfla_0096 from Methylobacillus flagellatus (strain ATCC 51484 / DSM 6875 / VKM B-1610 / KT).